A 429-amino-acid chain; its full sequence is Mannose-6-phosphate isomerase (429 aa).

At Ser2 the chain carries N-acetylserine. At Ser107 the chain carries Phosphoserine. Zn(2+)-binding residues include Gln109, His111, Glu136, and His281. Arg300 is an active-site residue.

The protein belongs to the mannose-6-phosphate isomerase type 1 family. As to quaternary structure, monomer. Zn(2+) is required as a cofactor.

Its subcellular location is the cytoplasm. The catalysed reaction is D-mannose 6-phosphate = D-fructose 6-phosphate. It functions in the pathway nucleotide-sugar biosynthesis; GDP-alpha-D-mannose biosynthesis; alpha-D-mannose 1-phosphate from D-fructose 6-phosphate: step 1/2. With respect to regulation, can be inhibited by an excess of zinc. Involved in the synthesis of the GDP-mannose and dolichol-phosphate-mannose required for a number of critical mannosyl transfer reactions. This chain is Mannose-6-phosphate isomerase (PMI40), found in Saccharomyces cerevisiae (strain ATCC 204508 / S288c) (Baker's yeast).